We begin with the raw amino-acid sequence, 257 residues long: METRVKKLRILLSNDDGVFAEGINTLARVLADIADITIVAPDRNRSGASNSLTLESPLRVRQIDEHIHSVQGTPTDCVHFALNELMKDNLPDLIIAGINHGANLGDDTLYSGTVAAATEGHFLGLPAIAISLVGREHFDTAAQVALKIVKNHLVSPLTTQKVLNVNVPDCEYEQLMGWEVTRLGARHHAESMIKDTDPRGETIYWLGPPGKKQDAGEGTDFFVVKQHRVSITPLQVDLTAHDSLGMITDWLSLESSK.

4 residues coordinate a divalent metal cation: Asp15, Asp16, Ser46, and Asn99.

The protein belongs to the SurE nucleotidase family. It depends on a divalent metal cation as a cofactor.

Its subcellular location is the cytoplasm. The enzyme catalyses a ribonucleoside 5'-phosphate + H2O = a ribonucleoside + phosphate. Nucleotidase that shows phosphatase activity on nucleoside 5'-monophosphates. The chain is 5'-nucleotidase SurE from Aliivibrio fischeri (strain ATCC 700601 / ES114) (Vibrio fischeri).